The following is a 299-amino-acid chain: Biotin transporter (299 aa).

10 consecutive transmembrane segments (helical) span residues 2–22 (ALLIITTILWAFSFSLFGEYL), 26–46 (VDSYFAVLIRVGLAALVFLPF), 56–76 (TISLYMLVGAMQLGIMYMLSF), 81–101 (YLTVSELLLFTVLTPLYITLI), 110–130 (LRWGYAFSALLAVIGAGIIRY), 137–157 (FWVGLLLVQLSNISFAIGMVG), 172–192 (AFAWFYLGAFLVAAVAWSLLG), 202–222 (LQWSILVFLGVVASGIGYFMW), 233–253 (TLGIMNNMHVPAGLLVNLAIW), and 256–276 (QPHWPSFITGAAVILASLWVH). EamA domains lie at 3–128 (LLII…AGII) and 139–274 (VGLL…ASLW).

This sequence belongs to the drug/metabolite transporter (DMT) superfamily. 10 TMS drug/metabolite exporter (DME) (TC 2.A.7.3) family.

The protein resides in the cell inner membrane. The catalysed reaction is biotin(in) = biotin(out). Its function is as follows. Uptake of biotin. This is Biotin transporter from Salmonella typhi.